We begin with the raw amino-acid sequence, 227 residues long: Cytochrome c oxidase subunit 2 (227 aa).

Residues 1-14 (MAHAAQVGLQDATS) are Mitochondrial intermembrane-facing. The helical transmembrane segment at 15–45 (PIMEELITFHDHALMIIFLICFLVLYALFLT) threads the bilayer. Topologically, residues 46 to 59 (LTTKLTSTNISDAQ) are mitochondrial matrix. The chain crosses the membrane as a helical span at residues 60–87 (EMETIWTILPAIILVLIALPSLRILYMT). Topologically, residues 88–227 (DEINDPSFTI…IFEMGPVFAL (140 aa)) are mitochondrial intermembrane. Residues His161, Cys196, Glu198, Cys200, His204, and Met207 each coordinate Cu cation. Glu198 serves as a coordination point for Mg(2+).

It belongs to the cytochrome c oxidase subunit 2 family. Component of the cytochrome c oxidase (complex IV, CIV), a multisubunit enzyme composed of 14 subunits. The complex is composed of a catalytic core of 3 subunits MT-CO1, MT-CO2 and MT-CO3, encoded in the mitochondrial DNA, and 11 supernumerary subunits COX4I, COX5A, COX5B, COX6A, COX6B, COX6C, COX7A, COX7B, COX7C, COX8 and NDUFA4, which are encoded in the nuclear genome. The complex exists as a monomer or a dimer and forms supercomplexes (SCs) in the inner mitochondrial membrane with NADH-ubiquinone oxidoreductase (complex I, CI) and ubiquinol-cytochrome c oxidoreductase (cytochrome b-c1 complex, complex III, CIII), resulting in different assemblies (supercomplex SCI(1)III(2)IV(1) and megacomplex MCI(2)III(2)IV(2)). Found in a complex with TMEM177, COA6, COX18, COX20, SCO1 and SCO2. Interacts with TMEM177 in a COX20-dependent manner. Interacts with COX20. Interacts with COX16. It depends on Cu cation as a cofactor.

The protein localises to the mitochondrion inner membrane. It carries out the reaction 4 Fe(II)-[cytochrome c] + O2 + 8 H(+)(in) = 4 Fe(III)-[cytochrome c] + 2 H2O + 4 H(+)(out). Functionally, component of the cytochrome c oxidase, the last enzyme in the mitochondrial electron transport chain which drives oxidative phosphorylation. The respiratory chain contains 3 multisubunit complexes succinate dehydrogenase (complex II, CII), ubiquinol-cytochrome c oxidoreductase (cytochrome b-c1 complex, complex III, CIII) and cytochrome c oxidase (complex IV, CIV), that cooperate to transfer electrons derived from NADH and succinate to molecular oxygen, creating an electrochemical gradient over the inner membrane that drives transmembrane transport and the ATP synthase. Cytochrome c oxidase is the component of the respiratory chain that catalyzes the reduction of oxygen to water. Electrons originating from reduced cytochrome c in the intermembrane space (IMS) are transferred via the dinuclear copper A center (CU(A)) of subunit 2 and heme A of subunit 1 to the active site in subunit 1, a binuclear center (BNC) formed by heme A3 and copper B (CU(B)). The BNC reduces molecular oxygen to 2 water molecules using 4 electrons from cytochrome c in the IMS and 4 protons from the mitochondrial matrix. The sequence is that of Cytochrome c oxidase subunit 2 (MT-CO2) from Gorilla gorilla gorilla (Western lowland gorilla).